Consider the following 385-residue polypeptide: D-alanine--D-alanine ligase (385 aa).

Residues 165-375 form the ATP-grasp domain; the sequence is KRVFTSFGLK…YPELVDRLVE (211 aa). An ATP-binding site is contributed by 201 to 256; it reads AGEHGWPLFVKPARAGSSIGITKVDDLAGLDEAVAEAQRHDPKIIVEALLRGREIE. 3 residues coordinate Mg(2+): D329, E342, and N344.

Belongs to the D-alanine--D-alanine ligase family. Requires Mg(2+) as cofactor. The cofactor is Mn(2+).

It localises to the cytoplasm. It carries out the reaction 2 D-alanine + ATP = D-alanyl-D-alanine + ADP + phosphate + H(+). The protein operates within cell wall biogenesis; peptidoglycan biosynthesis. In terms of biological role, cell wall formation. This Streptomyces avermitilis (strain ATCC 31267 / DSM 46492 / JCM 5070 / NBRC 14893 / NCIMB 12804 / NRRL 8165 / MA-4680) protein is D-alanine--D-alanine ligase.